Reading from the N-terminus, the 186-residue chain is Threonylcarbamoyl-AMP synthase (186 aa).

The 186-residue stretch at 1-186 (MADTWEAAHS…LNNQVFRDDA (186 aa)) folds into the YrdC-like domain.

It belongs to the SUA5 family. TsaC subfamily.

The protein resides in the cytoplasm. It carries out the reaction L-threonine + hydrogencarbonate + ATP = L-threonylcarbamoyladenylate + diphosphate + H2O. Functionally, required for the formation of a threonylcarbamoyl group on adenosine at position 37 (t(6)A37) in tRNAs that read codons beginning with adenine. Catalyzes the conversion of L-threonine, HCO(3)(-)/CO(2) and ATP to give threonylcarbamoyl-AMP (TC-AMP) as the acyladenylate intermediate, with the release of diphosphate. This Idiomarina loihiensis (strain ATCC BAA-735 / DSM 15497 / L2-TR) protein is Threonylcarbamoyl-AMP synthase.